A 115-amino-acid chain; its full sequence is Nitrogenase-stabilizing/protective protein NifW (115 aa).

The protein belongs to the NifW family. As to quaternary structure, homotrimer; associates with NifD.

Functionally, may protect the nitrogenase Fe-Mo protein from oxidative damage. In Methylobacterium sp. (strain 4-46), this protein is Nitrogenase-stabilizing/protective protein NifW.